Here is a 411-residue protein sequence, read N- to C-terminus: Phospholipase ABHD3 (411 aa).

Residues 25–45 (VGFFGSGVGFSLILGFSVAYA) traverse the membrane as a helical; Signal-anchor for type II membrane protein segment. Residues 140 to 247 (PTVLLLPGLT…PLKAAATFSV (108 aa)) enclose the AB hydrolase-1 domain. Active-site charge relay system residues include serine 220, aspartate 346, and histidine 375.

This sequence belongs to the AB hydrolase superfamily. AB hydrolase 4 family.

The protein resides in the membrane. It catalyses the reaction a 1,2-diacyl-sn-glycero-3-phosphocholine + H2O = a 1-acyl-sn-glycero-3-phosphocholine + a fatty acid + H(+). It carries out the reaction a 1,2-diacyl-sn-glycero-3-phosphocholine + H2O = a 2-acyl-sn-glycero-3-phosphocholine + a fatty acid + H(+). The enzyme catalyses 1-tetradecanoyl-2-(9Z,12Z-octadecadienoyl)-sn-glycero-3-phosphocholine + H2O = 2-(9Z,12Z-octadecadienoyl)-sn-glycero-3-phosphocholine + tetradecanoate + H(+). The catalysed reaction is 1-tetradecanoyl-2-(9Z,12Z-octadecadienoyl)-sn-glycero-3-phosphocholine + H2O = 1-tetradecanoyl-sn-glycero-3-phosphocholine + (9Z,12Z)-octadecadienoate + H(+). It catalyses the reaction 1-tetradecanoyl-2-(5Z,8Z,11Z,14Z-eicosatetraenoyl)-sn-glycero-3-phosphocholine + H2O = 2-(5Z,8Z,11Z,14Z)-eicosatetraenoyl-sn-glycero-3-phosphocholine + tetradecanoate + H(+). It carries out the reaction 1-tetradecanoyl-2-(4Z,7Z,10Z,13Z,16Z,19Z-docosahexaenoyl)-sn-glycero-3-phosphocholine + H2O = 2-(4Z,7Z,10Z,13Z,16Z,19Z-docosahexaenoyl)-sn-glycero-3-phosphocholine + tetradecanoate + H(+). The enzyme catalyses 1,2-ditetradecanoyl-sn-glycero-3-phosphocholine + H2O = 2-tetradecanoyl-sn-glycero-3-phosphocholine + tetradecanoate + H(+). The catalysed reaction is 1-octadecanoyl-2-acetyl-sn-glycero-3-phosphocholine + H2O = 1-octadecanoyl-sn-glycero-3-phosphocholine + acetate + H(+). It catalyses the reaction 1,2-ditetradecanoyl-sn-glycero-3-phosphocholine + H2O = 1-tetradecanoyl-sn-glycero-3-phosphocholine + tetradecanoate + H(+). It carries out the reaction 1-octadecanoyl-2-pentanoyl-sn-glycero-3-phosphocholine + H2O = pentanoate + 1-octadecanoyl-sn-glycero-3-phosphocholine + H(+). The enzyme catalyses 1-octadecanoyl-2-hexanoyl-sn-glycero-3-phosphocholine + H2O = hexanoate + 1-octadecanoyl-sn-glycero-3-phosphocholine + H(+). The catalysed reaction is 1-octadecanoyl-2-octanoyl-sn-glycero-3-phosphocholine + H2O = 1-octadecanoyl-sn-glycero-3-phosphocholine + octanoate + H(+). It catalyses the reaction 1-octadecanoyl-2-nonanoyl-sn-glycero-3-phosphocholine + H2O = nonanoate + 1-octadecanoyl-sn-glycero-3-phosphocholine + H(+). It carries out the reaction 1-O-hexadecyl-2-nonadioyl-sn-glycero-3-phosphocholine + H2O = nonanedioate + 1-O-hexadecyl-sn-glycero-3-phosphocholine + H(+). The enzyme catalyses 1-hexadecanoyl-2-nonadioyl-sn-glycero-3-phosphocholine + H2O = nonanedioate + 1-hexadecanoyl-sn-glycero-3-phosphocholine + H(+). The catalysed reaction is 1-hexadecanoyl-2-(9-oxononanoyl)-sn-glycero-3-phosphocholine + H2O = 9-oxononanoate + 1-hexadecanoyl-sn-glycero-3-phosphocholine + H(+). It catalyses the reaction 1-hexadecanoyl-2-(5-oxopentanoyl)-sn-glycero-3-phosphocholine + H2O = 5-oxopentanoate + 1-hexadecanoyl-sn-glycero-3-phosphocholine + H(+). It carries out the reaction 1-hexadecanoyl-2-glutaroyl-sn-glycero-3-phosphocholine + H2O = glutarate + 1-hexadecanoyl-sn-glycero-3-phosphocholine + H(+). The enzyme catalyses 1-O-hexadecyl-2-acetyl-sn-glycero-3-phosphocholine + H2O = 1-O-hexadecyl-sn-glycero-3-phosphocholine + acetate + H(+). Functionally, phospholipase that may play a role in phospholipids remodeling. May selectively cleave myristate (C14)-containing phosphatidylcholines through its predominant phospholipase 1 activity, cleaving preferentially acyl groups in sn1 position. In parallel, may have a minor phospholipase 2 activity acting on acyl groups in position sn2. In addition to (C14)-containing phosphatidylcholines, may also act on other medium-chain-containing and oxidatively truncated phospholipids. This Bos taurus (Bovine) protein is Phospholipase ABHD3.